The following is a 325-amino-acid chain: Large ribosomal subunit protein uL4m (325 aa).

The tract at residues A113 to P158 is disordered.

The protein belongs to the universal ribosomal protein uL4 family. As to quaternary structure, component of the mitochondrial large ribosomal subunit (mt-LSU). Mature N.crassa 74S mitochondrial ribosomes consist of a small (37S) and a large (54S) subunit. The 37S small subunit contains a 16S ribosomal RNA (16S mt-rRNA) and 32 different proteins. The 54S large subunit contains a 23S rRNA (23S mt-rRNA) and 42 different proteins.

The protein resides in the mitochondrion. In terms of biological role, component of the mitochondrial ribosome (mitoribosome), a dedicated translation machinery responsible for the synthesis of mitochondrial genome-encoded proteins, including at least some of the essential transmembrane subunits of the mitochondrial respiratory chain. The mitoribosomes are attached to the mitochondrial inner membrane and translation products are cotranslationally integrated into the membrane. In Neurospora crassa (strain ATCC 24698 / 74-OR23-1A / CBS 708.71 / DSM 1257 / FGSC 987), this protein is Large ribosomal subunit protein uL4m (yml6).